Reading from the N-terminus, the 391-residue chain is Multidrug resistance protein MdtL (391 aa).

Transmembrane regions (helical) follow at residues F4–V24, I42–A62, P69–E89, L93–F113, L131–M151, S158–L178, F203–V222, A245–F265, T269–P289, V293–M313, L331–I351, and M356–A376.

The protein belongs to the major facilitator superfamily. DHA1 family. MdtL (TC 2.A.1.2.22) subfamily.

Its subcellular location is the cell inner membrane. Its function is as follows. Confers resistance to chloramphenicol. The polypeptide is Multidrug resistance protein MdtL (Escherichia coli O139:H28 (strain E24377A / ETEC)).